A 114-amino-acid polypeptide reads, in one-letter code: Large ribosomal subunit protein uL22 (114 aa).

It belongs to the universal ribosomal protein uL22 family. Part of the 50S ribosomal subunit.

In terms of biological role, this protein binds specifically to 23S rRNA; its binding is stimulated by other ribosomal proteins, e.g. L4, L17, and L20. It is important during the early stages of 50S assembly. It makes multiple contacts with different domains of the 23S rRNA in the assembled 50S subunit and ribosome. The globular domain of the protein is located near the polypeptide exit tunnel on the outside of the subunit, while an extended beta-hairpin is found that lines the wall of the exit tunnel in the center of the 70S ribosome. The polypeptide is Large ribosomal subunit protein uL22 (Desulfitobacterium hafniense (strain Y51)).